Reading from the N-terminus, the 238-residue chain is Probable transcriptional regulatory protein SGO_0454 (238 aa).

It belongs to the TACO1 family. YeeN subfamily.

It localises to the cytoplasm. This chain is Probable transcriptional regulatory protein SGO_0454, found in Streptococcus gordonii (strain Challis / ATCC 35105 / BCRC 15272 / CH1 / DL1 / V288).